A 118-amino-acid polypeptide reads, in one-letter code: Large ribosomal subunit protein bL19 (118 aa).

This sequence belongs to the bacterial ribosomal protein bL19 family.

In terms of biological role, this protein is located at the 30S-50S ribosomal subunit interface and may play a role in the structure and function of the aminoacyl-tRNA binding site. The protein is Large ribosomal subunit protein bL19 of Salinibacter ruber (strain DSM 13855 / M31).